A 173-amino-acid chain; its full sequence is C-phycocyanin-2 beta subunit (173 aa).

Position 73 is an N4-methylasparagine (Asn73). Residues Cys83 and Cys154 each contribute to the (2R,3E)-phycocyanobilin site.

It belongs to the phycobiliprotein family. In terms of assembly, heterodimer of an alpha and a beta subunit, which further assembles into trimers and the trimers into hexamers. Contains two covalently linked bilin chromophores.

It localises to the cellular thylakoid membrane. In terms of biological role, light-harvesting photosynthetic bile pigment-protein from the phycobiliprotein complex (phycobilisome, PBS). Phycocyanin is the major phycobiliprotein in the PBS rod. The protein is C-phycocyanin-2 beta subunit (cpcB2) of Synechococcus sp. (strain ATCC 27144 / PCC 6301 / SAUG 1402/1) (Anacystis nidulans).